The primary structure comprises 154 residues: Anaerobic ribonucleoside-triphosphate reductase-activating protein (154 aa).

[4Fe-4S] cluster contacts are provided by Cys-26, Cys-30, and Cys-33. S-adenosyl-L-methionine contacts are provided by residues 32 to 34 (GCY) and Gly-74.

The protein belongs to the organic radical-activating enzymes family. Forms a tetramer composed of two NrdD and two NrdG subunits. It depends on [4Fe-4S] cluster as a cofactor.

It localises to the cytoplasm. It catalyses the reaction glycyl-[protein] + reduced [flavodoxin] + S-adenosyl-L-methionine = glycin-2-yl radical-[protein] + semiquinone [flavodoxin] + 5'-deoxyadenosine + L-methionine + H(+). Activation of anaerobic ribonucleoside-triphosphate reductase under anaerobic conditions by generation of an organic free radical, using S-adenosylmethionine and reduced flavodoxin as cosubstrates to produce 5'-deoxy-adenosine. This Escherichia coli O157:H7 protein is Anaerobic ribonucleoside-triphosphate reductase-activating protein (nrdG).